A 234-amino-acid polypeptide reads, in one-letter code: bZIP transcription factor 1 (234 aa).

The disordered stretch occupies residues 67-134 (RAQSDGSNAL…DKQRNAQQQL (68 aa)). Over residues 70–86 (SDGSNALLSSIGPSGTT) the composition is skewed to polar residues. The span at 88 to 128 (RPRDEMDCFTDTHKHKRGDGNKSRRREQCRANQARYRDKQR) shows a compositional bias: basic and acidic residues. Residues 106–169 (DGNKSRRREQ…RTNQSPWNTV (64 aa)) enclose the bZIP domain. Residues 109–128 (KSRRREQCRANQARYRDKQR) are basic motif. The interval 134–155 (LERSVEQLQSELSTLKHRNLDL) is leucine-zipper.

It belongs to the bZIP family. In terms of assembly, interacts with PKZ1.

It localises to the nucleus. Required for normal zoospore movement, formation of appressoria by germinated zoospore cysts and plant infection. In Phytophthora infestans (Potato late blight agent), this protein is bZIP transcription factor 1.